The sequence spans 333 residues: Large ribosomal subunit protein mL44 (333 aa).

A mitochondrion-targeting transit peptide spans 1 to 30 (MASAVFRLLQQGPRRLLAPAVPTLAPPVRG). Residues 86–228 (DLLKTAFINS…LITQMTGKEL (143 aa)) form the RNase III domain. The region spanning 236 to 306 (NPMGLLVEEL…ARVALRKLYG (71 aa)) is the DRBM domain. A compositionally biased stretch (basic and acidic residues) spans 311 to 327 (RRPWDYSKPKESPKRAE). Residues 311–333 (RRPWDYSKPKESPKRAEQTSVAS) are disordered.

It belongs to the ribonuclease III family. Mitochondrion-specific ribosomal protein mL44 subfamily. As to quaternary structure, component of the mitochondrial ribosome large subunit (39S) which comprises a 16S rRNA and about 50 distinct proteins.

Its subcellular location is the mitochondrion. In terms of biological role, component of the 39S subunit of mitochondrial ribosome. May have a function in the assembly/stability of nascent mitochondrial polypeptides exiting the ribosome. This is Large ribosomal subunit protein mL44 (Mrpl44) from Mus musculus (Mouse).